Here is a 173-residue protein sequence, read N- to C-terminus: MAARMDPGIGGEVTLLHTSQLDNLINLARASSLYYLTFGLACCGIELMQTGGPRADLMRFGAIPRASPRQADFMIVAGTLTYKMAERARLLYDQMPEPKYVISMGSCSNCGGLFQLGYSVCKGVDKVIPVDVYVPGCPPRPEALTEGLLRLQEIVRSEPWSTKRRPAAQAEGA.

4 residues coordinate [4Fe-4S] cluster: Cys42, Cys43, Cys107, and Cys137.

It belongs to the complex I 20 kDa subunit family. In terms of assembly, NDH-1 is composed of 14 different subunits. Subunits NuoB, C, D, E, F, and G constitute the peripheral sector of the complex. It depends on [4Fe-4S] cluster as a cofactor.

It is found in the cell inner membrane. The enzyme catalyses a quinone + NADH + 5 H(+)(in) = a quinol + NAD(+) + 4 H(+)(out). Its function is as follows. NDH-1 shuttles electrons from NADH, via FMN and iron-sulfur (Fe-S) centers, to quinones in the respiratory chain. Couples the redox reaction to proton translocation (for every two electrons transferred, four hydrogen ions are translocated across the cytoplasmic membrane), and thus conserves the redox energy in a proton gradient. The sequence is that of NADH-quinone oxidoreductase subunit B 2 from Anaeromyxobacter dehalogenans (strain 2CP-C).